The sequence spans 288 residues: Elongation factor Ts (288 aa).

An involved in Mg(2+) ion dislocation from EF-Tu region spans residues 82-85; it reads TDFV.

It belongs to the EF-Ts family.

The protein localises to the cytoplasm. Associates with the EF-Tu.GDP complex and induces the exchange of GDP to GTP. It remains bound to the aminoacyl-tRNA.EF-Tu.GTP complex up to the GTP hydrolysis stage on the ribosome. In Chlorobium limicola (strain DSM 245 / NBRC 103803 / 6330), this protein is Elongation factor Ts.